The sequence spans 547 residues: Mucin-13 (547 aa).

Over residues 1-210 (MSQSSGGTST…TVTSSSSTGS (210 aa)) the composition is skewed to low complexity. The segment at 1–218 (MSQSSGGTST…GSNDPCNSNP (218 aa)) is disordered. In terms of domain architecture, EGF-like 1 spans 210–249 (SNDPCNSNPCKSPASCVKLYDSYFCLCLEGYYYNNSSSCV). 3 cysteine pairs are disulfide-bonded: Cys214-Cys225, Cys219-Cys234, and Cys236-Cys248. N-linked (GlcNAc...) asparagine glycosylation is found at Asn243, Asn244, and Asn263. In terms of domain architecture, SEA spans 250 to 366 (KGTTFPGEIG…ERYFQQDRCD (117 aa)). 2 consecutive EGF-like domains span residues 361-401 (QQDR…PFCV) and 401-441 (VAPT…GKCE). Disulfide bonds link Cys365-Cys378, Cys370-Cys384, Cys386-Cys400, Cys409-Cys427, and Cys429-Cys440. A helical membrane pass occupies residues 459–479 (ILTIVGTIAGAFILILLIVFI). Over 480-547 (VSMRSKNKKK…NHRSMPRPDY (68 aa)) the chain is Cytoplasmic. Positions 525–547 (KTGVPSQTSNPYANHRSMPRPDY) are disordered.

As to quaternary structure, homodimer of beta subunits. Post-translationally, cleaved into two subunits, alpha and beta, probably between the first EGF domain and the SEA domain. Beta subunit contains the cytoplasmic tail and alpha subunit the extracellular tail. The homooligomerization into dimers is dependent on intrachain disulfide bonds. In terms of processing, highly glycosylated.

The protein resides in the cell membrane. It is found in the secreted. Functionally, epithelial and hemopoietic transmembrane mucin that may play a role in cell signaling. In Rattus norvegicus (Rat), this protein is Mucin-13 (Muc13).